A 173-amino-acid chain; its full sequence is Translation initiation factor IF-3 (173 aa).

The protein belongs to the IF-3 family. In terms of assembly, monomer.

Its subcellular location is the cytoplasm. IF-3 binds to the 30S ribosomal subunit and shifts the equilibrium between 70S ribosomes and their 50S and 30S subunits in favor of the free subunits, thus enhancing the availability of 30S subunits on which protein synthesis initiation begins. The polypeptide is Translation initiation factor IF-3 (Bartonella bacilliformis (strain ATCC 35685 / KC583 / Herrer 020/F12,63)).